Consider the following 226-residue polypeptide: PKHD-type hydroxylase PiuC (226 aa).

In terms of domain architecture, Fe2OG dioxygenase spans 78-178 (KVFPPLFNCY…RYASFFWTQS (101 aa)). Fe cation is bound by residues H96, D98, and H159. R169 is a 2-oxoglutarate binding site.

Requires Fe(2+) as cofactor. L-ascorbate serves as cofactor.

The protein is PKHD-type hydroxylase PiuC (piuC) of Pseudomonas aeruginosa (strain ATCC 15692 / DSM 22644 / CIP 104116 / JCM 14847 / LMG 12228 / 1C / PRS 101 / PAO1).